The sequence spans 490 residues: UDP-N-acetylmuramate--L-alanine ligase (490 aa).

Position 126-132 (126-132 (GTHGKTT)) interacts with ATP.

Belongs to the MurCDEF family.

Its subcellular location is the cytoplasm. The enzyme catalyses UDP-N-acetyl-alpha-D-muramate + L-alanine + ATP = UDP-N-acetyl-alpha-D-muramoyl-L-alanine + ADP + phosphate + H(+). It functions in the pathway cell wall biogenesis; peptidoglycan biosynthesis. Cell wall formation. The protein is UDP-N-acetylmuramate--L-alanine ligase of Baumannia cicadellinicola subsp. Homalodisca coagulata.